A 231-amino-acid polypeptide reads, in one-letter code: Red fluorescent protein eqFP611 (231 aa).

The 2-iminomethyl-5-imidazolinone (Met-Gly) cross-link spans 63–65; the sequence is MYG. A (E)-2,3-didehydrotyrosine modification is found at tyrosine 64.

Belongs to the GFP family. In terms of assembly, monomer. Post-translationally, contains a chromophore consisting of modified amino acid residues. The chromophore is formed by autocatalytic backbone condensation between Xaa-N and Gly-(N+2), oxidation of Tyr-(N+1) to didehydrotyrosine, and formation of a double bond to the alpha-amino nitrogen of residue Xaa-N. Maturation of the chromophore requires nothing other than molecular oxygen.

In terms of biological role, pigment protein. The polypeptide is Red fluorescent protein eqFP611 (Entacmaea quadricolor (Bubble-tip anemone)).